A 284-amino-acid polypeptide reads, in one-letter code: RNase adapter protein RapZ (284 aa).

8 to 15 contacts ATP; it reads GRSGSGKS. 56–59 lines the GTP pocket; sequence DVRN. The segment at 266–284 is RNA-binding; it reads RSRGKNVQLRHRTLEKRKE.

Belongs to the RapZ-like family. RapZ subfamily. Homotrimer.

Its function is as follows. Modulates the synthesis of GlmS, by affecting the processing and stability of the regulatory small RNA GlmZ. When glucosamine-6-phosphate (GlcN6P) concentrations are high in the cell, RapZ binds GlmZ and targets it to cleavage by RNase E. Consequently, GlmZ is inactivated and unable to activate GlmS synthesis. Under low GlcN6P concentrations, RapZ is sequestered and inactivated by an other regulatory small RNA, GlmY, preventing GlmZ degradation and leading to synthesis of GlmS. This Hamiltonella defensa subsp. Acyrthosiphon pisum (strain 5AT) protein is RNase adapter protein RapZ.